The primary structure comprises 271 residues: 5-deoxy-glucuronate isomerase (271 aa).

The protein belongs to the isomerase IolB family.

The catalysed reaction is 5-deoxy-D-glucuronate = 5-dehydro-2-deoxy-D-gluconate. It participates in polyol metabolism; myo-inositol degradation into acetyl-CoA; acetyl-CoA from myo-inositol: step 4/7. Functionally, involved in the isomerization of 5-deoxy-glucuronate (5DG) to 5-dehydro-2-deoxy-D-gluconate (DKG or 2-deoxy-5-keto-D-gluconate). The polypeptide is 5-deoxy-glucuronate isomerase (Bacillus licheniformis (strain ATCC 14580 / DSM 13 / JCM 2505 / CCUG 7422 / NBRC 12200 / NCIMB 9375 / NCTC 10341 / NRRL NRS-1264 / Gibson 46)).